Reading from the N-terminus, the 151-residue chain is UPF0208 membrane protein YfbV (151 aa).

A run of 2 helical transmembrane segments spans residues 46-65 (YAIRFMPPVAVFTLCWQIAL) and 69-91 (LGPAVATALFALSLPMQGLWWLG).

It belongs to the UPF0208 family.

The protein localises to the cell inner membrane. In Salmonella choleraesuis (strain SC-B67), this protein is UPF0208 membrane protein YfbV.